The chain runs to 278 residues: MKTKTDFLKMKEQGEPITMLTAYDYPSAKLAEEAEVDMILVGDSLGMVVLGYDSTVPVTVEDMIHHTKAVRRGAKETFIVTDMPFMSYHVSPQDTMVNARRIVQESGAHALKVEGAGEVISTIHYLTSAGIPVVAHLGLTPQSVGVLGGYKVQGKDAESAKKLIEDAKRCEEAGAIALVLECVPMQLAEFISKQLTIPTIGIGAGQKVDGQVLVYHDLISYGVNRVPKFVKQYTFVQEEIVRGISQYVTEVKTGQFPEEKHSFTMKEEECLALYGGKQ.

D43 and D82 together coordinate Mg(2+). 3-methyl-2-oxobutanoate-binding positions include 43 to 44 (DS), D82, and K112. Mg(2+) is bound at residue E114. E181 (proton acceptor) is an active-site residue.

It belongs to the PanB family. As to quaternary structure, homodecamer; pentamer of dimers. The cofactor is Mg(2+).

The protein localises to the cytoplasm. The catalysed reaction is 3-methyl-2-oxobutanoate + (6R)-5,10-methylene-5,6,7,8-tetrahydrofolate + H2O = 2-dehydropantoate + (6S)-5,6,7,8-tetrahydrofolate. It functions in the pathway cofactor biosynthesis; (R)-pantothenate biosynthesis; (R)-pantoate from 3-methyl-2-oxobutanoate: step 1/2. Its function is as follows. Catalyzes the reversible reaction in which hydroxymethyl group from 5,10-methylenetetrahydrofolate is transferred onto alpha-ketoisovalerate to form ketopantoate. The protein is 3-methyl-2-oxobutanoate hydroxymethyltransferase of Bacillus cereus (strain ATCC 10987 / NRS 248).